The following is a 633-amino-acid chain: Extracellular metalloproteinase 3 (633 aa).

The signal sequence occupies residues 1–18; it reads MHGLLLAGLLALPMNVLA. Residues 19–246 constitute a propeptide that is removed on maturation; it reads YPAEQHASNV…VHNVVDYVAS (228 aa). Asn-410 carries N-linked (GlcNAc...) asparagine glycosylation. Residue His-429 coordinates Zn(2+). The active site involves Glu-430. His-433 contributes to the Zn(2+) binding site. Asn-480 and Asn-622 each carry an N-linked (GlcNAc...) asparagine glycan.

Belongs to the peptidase M36 family. Requires Zn(2+) as cofactor.

It is found in the secreted. In terms of biological role, secreted metalloproteinase probably acting as a virulence factor. The polypeptide is Extracellular metalloproteinase 3 (MEP3) (Trichophyton rubrum (Athlete's foot fungus)).